We begin with the raw amino-acid sequence, 695 residues long: Ubiquitin carboxyl-terminal hydrolase 20 (695 aa).

Disordered stretches follow at residues 1-20 (MLMA…SSIL) and 42-162 (SLAL…SLFY). Low complexity-rich tracts occupy residues 9-20 (PSSILPRSSSIL) and 61-86 (NHDS…SQSV). Acidic residues predominate over residues 112–124 (DDIDDDIWGDDDL). The 301-residue stretch at 176–476 (AGLWNLGNSC…DSYILFYARE (301 aa)) folds into the USP domain. Residue cysteine 185 is the Nucleophile of the active site. Histidine 435 serves as the catalytic Proton acceptor. Over residues 556–571 (SAESSSGEESPMGELL) the composition is skewed to low complexity. 2 disordered regions span residues 556–585 (SAES…PCTE) and 674–695 (AREL…LKTT).

The protein belongs to the peptidase C19 family.

It carries out the reaction Thiol-dependent hydrolysis of ester, thioester, amide, peptide and isopeptide bonds formed by the C-terminal Gly of ubiquitin (a 76-residue protein attached to proteins as an intracellular targeting signal).. Its function is as follows. Recognizes and hydrolyzes the peptide bond at the C-terminal Gly of ubiquitin. Involved in the processing of poly-ubiquitin precursors as well as that of ubiquitinated proteins. The sequence is that of Ubiquitin carboxyl-terminal hydrolase 20 (UBP20) from Arabidopsis thaliana (Mouse-ear cress).